Here is a 380-residue protein sequence, read N- to C-terminus: Cytochrome b (380 aa).

Transmembrane regions (helical) follow at residues 33–53, 77–98, 113–133, and 178–198; these read FGSL…FLAM, WLIR…YLHI, WTIG…GYVL, and FFAF…IHLL. Residues H83 and H97 each contribute to the heme b site. H182 and H196 together coordinate heme b. H201 contacts a ubiquinone. 4 helical membrane-spanning segments follow: residues 226 to 246, 288 to 308, 320 to 340, and 347 to 367; these read YKDL…ALFS, LGGV…PFLH, VTQF…WIGG, and FVII…VLIP.

It belongs to the cytochrome b family. As to quaternary structure, the cytochrome bc1 complex contains 3 respiratory subunits (MT-CYB, CYC1 and UQCRFS1), 2 core proteins (UQCRC1 and UQCRC2) and probably 6 low-molecular weight proteins. Requires heme b as cofactor.

It localises to the mitochondrion inner membrane. In terms of biological role, component of the ubiquinol-cytochrome c reductase complex (complex III or cytochrome b-c1 complex) that is part of the mitochondrial respiratory chain. The b-c1 complex mediates electron transfer from ubiquinol to cytochrome c. Contributes to the generation of a proton gradient across the mitochondrial membrane that is then used for ATP synthesis. This chain is Cytochrome b (mt-cyb), found in Kareius bicoloratus (Stone flounder).